A 191-amino-acid chain; its full sequence is A-type ATP synthase subunit E (191 aa).

The protein belongs to the V-ATPase E subunit family. In terms of assembly, has multiple subunits with at least A(3), B(3), C, D, E, F, H, I and proteolipid K(x).

It localises to the cell membrane. Component of the A-type ATP synthase that produces ATP from ADP in the presence of a proton gradient across the membrane. This Methanoregula boonei (strain DSM 21154 / JCM 14090 / 6A8) protein is A-type ATP synthase subunit E.